Reading from the N-terminus, the 1070-residue chain is MLGDENGEMSTIPGLNQIQFEGFCGFMDRGLTEELYKFPKIEDTEQEIEFQLFVETYQLVEPLIKERDAVYESLTYSSELYVSAGLIWKTSKDMQEQTIFIGNIPLMNSLGTSIVNGIYRIVINQILQSPGIYYRSELDHNGISVYTGTIISDWGGRLELEIDRKARIWARVSRKQKISILVLSSAMGSNLREILENVCYPEIFLSFLTDKEKKKIGSKENAILEFYQQFSCVGGDPVFSESLCKELQKKFFQQRCELGRIGRRNMNQRLNLNIPQNNTFLLPRDILAAADRLIGMKFGMGPLDDMNHLKNKRIRSVADLLQDQFGLALVRLENVVRGTICGAIRHKLIPTPQNLVTSTPLTTTYESFFGLHPLSQVLDRTNPLTQIVHGRKLSYLGPGGLTGRTANFRIRDIHPSHYGRICPIDTSEGINVGLIGSLAIHARIGHWGSLESPFYKIFERSKKAQMLYLSPSRDEYYMVAAGNSLALNQGIQEEQVVPARYRQEFLTIAWEQVHLRSIFPFQYFSIGASLIPFIEHNDANRALMSSNMQRQAVPLSRSEKCIVGTGLERQVALDSGVPAIADHEGKIISTDTDKIILSGNGDALGIPLVMYQRSNKNTCMHQTARVRRGKCIKKGQILADGAATVGGELALGKNVLVAYMPWEGYNFEDAVLISERLVYEDIYTSFHIRKYEIQTHVTSQGPERITNEIPHLEAHLLRNLDKNGIVMLGSWVETGDILVGKLTPQVAKESSYAPEDRLLRAILGIQVSTSKETCLKLPIGGRGRVIDVRWVQKKGGSSYNPETIRVYISQKREIKVGDKVAGRHGNKGIISKILPRQDMPYLQDGRPVDMVFNPLGVPSRMNVGQLFECSLGLAGSLLDRHYRIAPFDERYEQEASRKLVFSELYQASKQTANPWVFEPEYPGKSRIFDGRTGGPFEQPVIIGKPYILKLIHQVDDKIHGRSSGHYALVTQQPLRGRSKQGGQRVGEMEVWALEGFGVAHILQEMLTYKSDHIRARQEVLGTTIIGGTIPKPEDAPESFRLLVRELRSLALELNHFLVSEKNFQINRKEA.

The protein belongs to the RNA polymerase beta chain family. In plastids the minimal PEP RNA polymerase catalytic core is composed of four subunits: alpha, beta, beta', and beta''. When a (nuclear-encoded) sigma factor is associated with the core the holoenzyme is formed, which can initiate transcription.

It localises to the plastid. The protein resides in the chloroplast. It carries out the reaction RNA(n) + a ribonucleoside 5'-triphosphate = RNA(n+1) + diphosphate. Functionally, DNA-dependent RNA polymerase catalyzes the transcription of DNA into RNA using the four ribonucleoside triphosphates as substrates. The polypeptide is DNA-directed RNA polymerase subunit beta (Gossypium hirsutum (Upland cotton)).